Here is a 136-residue protein sequence, read N- to C-terminus: Glutamate mutase sigma subunit (136 aa).

In terms of domain architecture, B12-binding spans 3 to 136 (KKKIVIGVIG…IIDLKKDFKI (134 aa)). Adenosylcob(III)alamin is bound by residues 13 to 17 (SDCHT), histidine 16, and 61 to 63 (SSI).

It belongs to the methylaspartate mutase GlmS subunit family. In terms of assembly, heterotetramer composed of 2 epsilon subunits (GlmE) and 2 sigma subunits (GlmS). GlmE exists as a homodimer and GlmS as a monomer. Adenosylcob(III)alamin serves as cofactor.

It carries out the reaction (2S,3S)-3-methyl-L-aspartate = L-glutamate. Its pathway is amino-acid degradation; L-glutamate degradation via mesaconate pathway; acetate and pyruvate from L-glutamate: step 1/4. In terms of biological role, catalyzes the carbon skeleton rearrangement of L-glutamate to L-threo-3-methylaspartate ((2S,3S)-3-methylaspartate). This is Glutamate mutase sigma subunit from Fusobacterium nucleatum subsp. nucleatum (strain ATCC 25586 / DSM 15643 / BCRC 10681 / CIP 101130 / JCM 8532 / KCTC 2640 / LMG 13131 / VPI 4355).